Consider the following 354-residue polypeptide: Biotin synthase (354 aa).

One can recognise a Radical SAM core domain in the interval 41–265; sequence NEVQISRLLS…LMPHSRVRLS (225 aa). 3 residues coordinate [4Fe-4S] cluster: Cys56, Cys60, and Cys63. The [2Fe-2S] cluster site is built by Cys100, Cys131, Cys191, and Arg263.

Belongs to the radical SAM superfamily. Biotin synthase family. Homodimer. Requires [4Fe-4S] cluster as cofactor. [2Fe-2S] cluster is required as a cofactor.

It carries out the reaction (4R,5S)-dethiobiotin + (sulfur carrier)-SH + 2 reduced [2Fe-2S]-[ferredoxin] + 2 S-adenosyl-L-methionine = (sulfur carrier)-H + biotin + 2 5'-deoxyadenosine + 2 L-methionine + 2 oxidized [2Fe-2S]-[ferredoxin]. It functions in the pathway cofactor biosynthesis; biotin biosynthesis; biotin from 7,8-diaminononanoate: step 2/2. Functionally, catalyzes the conversion of dethiobiotin (DTB) to biotin by the insertion of a sulfur atom into dethiobiotin via a radical-based mechanism. The sequence is that of Biotin synthase from Shewanella woodyi (strain ATCC 51908 / MS32).